The primary structure comprises 294 residues: NAD kinase (294 aa).

The active-site Proton acceptor is the D73. NAD(+)-binding positions include 73 to 74 (DG), 147 to 148 (NE), H158, R175, D177, 188 to 193 (TAYSLS), and Q249.

It belongs to the NAD kinase family. It depends on a divalent metal cation as a cofactor.

The protein localises to the cytoplasm. The catalysed reaction is NAD(+) + ATP = ADP + NADP(+) + H(+). Involved in the regulation of the intracellular balance of NAD and NADP, and is a key enzyme in the biosynthesis of NADP. Catalyzes specifically the phosphorylation on 2'-hydroxyl of the adenosine moiety of NAD to yield NADP. The polypeptide is NAD kinase (Aeromonas salmonicida (strain A449)).